The sequence spans 454 residues: Phenylalanine--tRNA ligase, mitochondrial (454 aa).

Residues 141–144 (SAHQ), Arg163, 170–172 (VHY), 177–179 (QME), Glu266, and Phe291 each bind substrate. The interval 327 to 347 (KSISTSSSSSSSSSSSSSSTL) is disordered. The segment covering 328–347 (SISTSSSSSSSSSSSSSSTL) has biased composition (low complexity). The 94-residue stretch at 361 to 454 (SKYPSCFKDV…LENHLSVKLR (94 aa)) folds into the FDX-ACB domain.

Belongs to the class-II aminoacyl-tRNA synthetase family. Monomer.

Its subcellular location is the mitochondrion matrix. It carries out the reaction tRNA(Phe) + L-phenylalanine + ATP = L-phenylalanyl-tRNA(Phe) + AMP + diphosphate + H(+). Its function is as follows. Is responsible for the charging of tRNA(Phe) with phenylalanine in mitochondrial translation. The polypeptide is Phenylalanine--tRNA ligase, mitochondrial (mpheS) (Dictyostelium discoideum (Social amoeba)).